Here is a 537-residue protein sequence, read N- to C-terminus: CTP synthase (537 aa).

Residues 1-267 (MAKYIFVTGG…DEYVIKRLNL (267 aa)) are amidoligase domain. A CTP-binding site is contributed by Ser13. Ser13 contacts UTP. An ATP-binding site is contributed by 14-19 (SLGKGI). Tyr54 contacts L-glutamine. Asp71 serves as a coordination point for ATP. Residues Asp71 and Glu141 each contribute to the Mg(2+) site. Residues 148–150 (DIE), 188–193 (KTKPTQ), and Lys224 contribute to the CTP site. UTP is bound by residues 188–193 (KTKPTQ) and Lys224. Residue 240 to 242 (RDV) participates in ATP binding. The Glutamine amidotransferase type-1 domain maps to 292 to 534 (EVALVGKYVD…VKAMLNLKIN (243 aa)). Position 354 (Gly354) interacts with L-glutamine. Catalysis depends on Cys381, which acts as the Nucleophile; for glutamine hydrolysis. L-glutamine contacts are provided by residues 382 to 385 (LGMQ), Glu405, and Arg462. Active-site residues include His507 and Glu509.

This sequence belongs to the CTP synthase family. As to quaternary structure, homotetramer.

It catalyses the reaction UTP + L-glutamine + ATP + H2O = CTP + L-glutamate + ADP + phosphate + 2 H(+). The enzyme catalyses L-glutamine + H2O = L-glutamate + NH4(+). It carries out the reaction UTP + NH4(+) + ATP = CTP + ADP + phosphate + 2 H(+). It functions in the pathway pyrimidine metabolism; CTP biosynthesis via de novo pathway; CTP from UDP: step 2/2. Its activity is regulated as follows. Allosterically activated by GTP, when glutamine is the substrate; GTP has no effect on the reaction when ammonia is the substrate. The allosteric effector GTP functions by stabilizing the protein conformation that binds the tetrahedral intermediate(s) formed during glutamine hydrolysis. Inhibited by the product CTP, via allosteric rather than competitive inhibition. Functionally, catalyzes the ATP-dependent amination of UTP to CTP with either L-glutamine or ammonia as the source of nitrogen. Regulates intracellular CTP levels through interactions with the four ribonucleotide triphosphates. This is CTP synthase from Caldanaerobacter subterraneus subsp. tengcongensis (strain DSM 15242 / JCM 11007 / NBRC 100824 / MB4) (Thermoanaerobacter tengcongensis).